The sequence spans 252 residues: CLAVATA3/ESR (CLE)-related protein 4A-2 (252 aa).

The signal sequence occupies residues 1 to 21 (MAKNAMLCLLILRVVLALAFA). The required for secretion from the host cytoplasm to the host apoplasm stretch occupies residues 21-83 (ATNKKGDEEP…SNQLPNNNWM (63 aa)). Residue asparagine 32 is glycosylated (N-linked (GlcNAc...) asparagine). The tract at residues 116–252 (RKTGMHSQRH…APAGPDPIHH (137 aa)) is disordered. 4 stretches are compositionally biased toward basic and acidic residues: residues 125–137 (HHEE…EKRV), 144–179 (PIHH…EKRV), 186–200 (PIHH…EKRA), and 207–242 (PTHH…EKRG). One copy of the A-1 repeat lies at 127–135 (EETTLEQEK). Positions 127 to 219 (EETTLEQEKR…HEETTLEQEK (93 aa)) are 6 X approximate repeat A. A CLE-1 repeat occupies 136-147 (RVAGAGPDPIHH). The 6 X approximate repeat CLE stretch occupies residues 136 to 252 (RVAGAGPDPI…APAGPDPIHH (117 aa)). An A-2 repeat occupies 148–156 (QDTTLEQEK). One copy of the CLE-2 repeat lies at 157–168 (RAVPAGPDPKHH). Residues 169 to 177 (EETTLEQEK) form an A-3 repeat. The CLE-3 repeat unit spans residues 178 to 189 (RVAGAGPDPIHH). An A-4 repeat occupies 190–198 (QDTTLEQEK). One copy of the CLE-4 repeat lies at 199–210 (RAVPAGPDPTHH). The A-5 repeat unit spans residues 211–219 (EETTLEQEK). Residues 220 to 231 (RAVPAGPDPKHH) form a CLE-5 repeat. One copy of the A-6 repeat lies at 232-240 (EETTFEQEK). A CLE-6 repeat occupies 241-252 (RGAPAGPDPIHH).

It belongs to the CLV3/ESR signal peptide family. Highly expressed exclusively within the dorsal esophageal gland cell during syncytium formation in host plants.

The protein localises to the secreted. Its subcellular location is the host cytoplasm. The protein resides in the host extracellular space. It localises to the extracellular space. It is found in the apoplast. Mimics host plant CLE extracellular signal peptides that regulate cell fate. May play a role in the differentiation or division of feeding cells (syncytia) induced in plant roots during infection. The polypeptide is CLAVATA3/ESR (CLE)-related protein 4A-2 (CLE-4A-2) (Globodera rostochiensis (Golden nematode worm)).